We begin with the raw amino-acid sequence, 367 residues long: Germination protease (367 aa).

Residues 1–15 constitute a propeptide that is removed on maturation; the sequence is MKEPLDLSKYSIRTD.

The protein belongs to the peptidase A25 family. As to quaternary structure, homotetramer. In terms of processing, autoproteolytically processed. The inactive tetrameric zymogen termed p46 autoprocesses to a smaller form termed p41, which is active only during spore germination.

The enzyme catalyses Endopeptidase action with P4 Glu or Asp, P1 preferably Glu &gt; Asp, P1' hydrophobic and P2' Ala.. Its function is as follows. Initiates the rapid degradation of small, acid-soluble proteins during spore germination. This chain is Germination protease, found in Bacillus cereus (strain ATCC 14579 / DSM 31 / CCUG 7414 / JCM 2152 / NBRC 15305 / NCIMB 9373 / NCTC 2599 / NRRL B-3711).